Here is a 348-residue protein sequence, read N- to C-terminus: Rhodopsin (348 aa).

At methionine 1 the chain carries N-acetylmethionine. The Extracellular segment spans residues 1–36 (MNGTEGPDFYIPMSNQTGVVRSPFEYPQYYLAEPWQ). N-linked (GlcNAc...) asparagine glycans are attached at residues asparagine 2 and asparagine 15. The helical transmembrane segment at 37–61 (FSMLAAYMFLLIVLGFPINFLTLYV) threads the bilayer. Over 62–73 (TVQHKKLRTPLN) the chain is Cytoplasmic. Residues 74-96 (YILLNLAVADLFMVLGGFTTTLY) form a helical membrane-spanning segment. Topologically, residues 97 to 110 (TSLHGYFVFGPTGC) are extracellular. Cysteine 110 and cysteine 187 form a disulfide bridge. The chain crosses the membrane as a helical span at residues 111-133 (NVEGFFATLGGEIALWSLVVLAI). A 'Ionic lock' involved in activated form stabilization motif is present at residues 134-136 (ERY). Residues 134 to 152 (ERYVVVCKPMSNFRFGENH) are Cytoplasmic-facing. Residues 153 to 173 (AIMGVAFTWIMALACAAPPLV) traverse the membrane as a helical segment. Over 174–202 (GWSRYIPEGMQCSCGIDYYTLKPEVNNES) the chain is Extracellular. Glutamate 201 serves as a coordination point for Zn(2+). A helical membrane pass occupies residues 203–224 (FVIYMFVVHFTIPLIIIFFCYG). Topologically, residues 225 to 252 (QLVFTVKEAAAQQQESATTQKAEKEVTR) are cytoplasmic. A helical transmembrane segment spans residues 253-274 (MVIIMVIAFLICWVPYASVAFY). Topologically, residues 275 to 286 (IFTHQGSNFGPI) are extracellular. Glutamine 279 is a binding site for Zn(2+). Residues 287-308 (FMTIPAFFAKSSSIYNPVIYIM) form a helical membrane-spanning segment. Lysine 296 bears the N6-(retinylidene)lysine mark. Residues 309 to 348 (MNKQFRNCMLTTICCGKNPLGDDEASATASKTETSQVAPA) are Cytoplasmic-facing. S-palmitoyl cysteine attachment occurs at residues cysteine 322 and cysteine 323. Residues 330–348 (DDEASATASKTETSQVAPA) are interaction with SAG. Serine 334 bears the Phosphoserine mark. Threonine 336 carries the post-translational modification Phosphothreonine. Serine 338 carries the phosphoserine modification. Threonine 340 and threonine 342 each carry phosphothreonine. Serine 343 carries the phosphoserine modification.

This sequence belongs to the G-protein coupled receptor 1 family. Opsin subfamily. As to quaternary structure, homodimer. May form a complex composed of RHO, GRK1 and RCVRN in a Ca(2+)-dependent manner; RCVRN prevents the interaction between GRK1 and RHO. Interacts with GRK1. Interacts (phosphorylated form) with SAG. Interacts with GNAT1. Interacts with GNAT3. SAG and G-proteins compete for a common binding site. Interacts with PRCD; the interaction promotes PRCD stability. Forms a complex with ASAP1 and ARF4. Forms a complex with ASAP1, RAB11A, Rabin8/RAB3IP, ARF4 and RAB11FIP3; the complex regulates Golgi-to-cilia rhodopsin/RHO transport in photoreceptors. In terms of processing, phosphorylated on some or all of the serine and threonine residues present in the C-terminal region. Post-translationally, contains one covalently linked retinal chromophore. Upon light absorption, the covalently bound 11-cis-retinal is converted to all-trans-retinal. After hydrolysis of the Schiff base and release of the covalently bound all-trans-retinal, active rhodopsin is regenerated by binding of a fresh molecule of 11-cis-retinal.

The protein localises to the membrane. The protein resides in the cell projection. Its subcellular location is the cilium. It is found in the photoreceptor outer segment. Photoreceptor required for image-forming vision at low light intensity. Required for photoreceptor cell viability after birth. Light-induced isomerization of 11-cis to all-trans retinal triggers a conformational change that activates signaling via G-proteins. Subsequent receptor phosphorylation mediates displacement of the bound G-protein alpha subunit by the arrestin SAG and terminates signaling. This Oryctolagus cuniculus (Rabbit) protein is Rhodopsin (RHO).